A 679-amino-acid chain; its full sequence is DNA-directed RNA polymerase subunit beta' (679 aa).

Zn(2+)-binding residues include cysteine 69, cysteine 71, cysteine 87, and cysteine 90. Residues aspartate 489, aspartate 491, and aspartate 493 each contribute to the Mg(2+) site.

It belongs to the RNA polymerase beta' chain family. RpoC1 subfamily. In terms of assembly, in plastids the minimal PEP RNA polymerase catalytic core is composed of four subunits: alpha, beta, beta', and beta''. When a (nuclear-encoded) sigma factor is associated with the core the holoenzyme is formed, which can initiate transcription. It depends on Mg(2+) as a cofactor. The cofactor is Zn(2+).

It is found in the plastid. Its subcellular location is the chloroplast. It catalyses the reaction RNA(n) + a ribonucleoside 5'-triphosphate = RNA(n+1) + diphosphate. In terms of biological role, DNA-dependent RNA polymerase catalyzes the transcription of DNA into RNA using the four ribonucleoside triphosphates as substrates. This Phalaenopsis aphrodite subsp. formosana (Moth orchid) protein is DNA-directed RNA polymerase subunit beta'.